The following is a 382-amino-acid chain: Layilin (382 aa).

The signal sequence occupies residues 1–21 (MRPGTALQAVLLAVLLVGLRA). The Extracellular portion of the chain corresponds to 22 to 235 (ATGRLLSASD…SREAALNLAY (214 aa)). A C-type lectin domain is found at 45–185 (TQRPCYKVIY…CNMKNNFICK (141 aa)). 2 disulfide bridges follow: C71/C184 and C150/C176. N-linked (GlcNAc...) asparagine glycosylation occurs at N117. The helical transmembrane segment at 236–256 (ILIPSIPLLLLLVVTTVVCWV) threads the bilayer. Residues 257–382 (WICRKRKREQ…GWVENEIYGY (126 aa)) lie on the Cytoplasmic side of the membrane. The disordered stretch occupies residues 266-285 (QPDPSTKKQHTIWPSPHQGN). A phosphoserine mark is found at S286 and S299. The segment at 330-374 (DYDNMAVNPSESGFVTLVSVESGFVTNDIYEFSPDQMGRSKESGW) is interaction with NF2. The interaction with TLN1 stretch occupies residues 337–382 (NPSESGFVTLVSVESGFVTNDIYEFSPDQMGRSKESGWVENEIYGY). 5 tandem repeats follow at residues 340–344 (ESGFV), 350–354 (ESGFV), 356–359 (NDIY), 371–375 (ESGWV), and 377–380 (NEIY). A 3 X 5 AA repeats of E-S-G-X-V region spans residues 340-375 (ESGFVTLVSVESGFVTNDIYEFSPDQMGRSKESGWV). Residues 356–380 (NDIYEFSPDQMGRSKESGWVENEIY) form a 2 X 4 AA repeats of N-X-I-Y region.

Interacts with NF2, RDX and TLN1.

Its subcellular location is the membrane. Functionally, receptor for hyaluronate. The protein is Layilin (LAYN) of Homo sapiens (Human).